The sequence spans 332 residues: 2,3-diketo-L-gulonate reductase (332 aa).

Catalysis depends on H44, which acts as the Proton donor. NAD(+) contacts are provided by residues 168–174 (ITMVDMS), 224–225 (WK), and 304–306 (GHE).

This sequence belongs to the LDH2/MDH2 oxidoreductase family. DlgD subfamily. As to quaternary structure, homodimer.

Its subcellular location is the cytoplasm. The catalysed reaction is 3-dehydro-L-gulonate + NAD(+) = 2,3-dioxo-L-gulonate + NADH + H(+). It carries out the reaction 3-dehydro-L-gulonate + NADP(+) = 2,3-dioxo-L-gulonate + NADPH + H(+). In terms of biological role, catalyzes the reduction of 2,3-diketo-L-gulonate in the presence of NADH, to form 3-keto-L-gulonate. This is 2,3-diketo-L-gulonate reductase from Escherichia fergusonii (strain ATCC 35469 / DSM 13698 / CCUG 18766 / IAM 14443 / JCM 21226 / LMG 7866 / NBRC 102419 / NCTC 12128 / CDC 0568-73).